We begin with the raw amino-acid sequence, 56 residues long: Large ribosomal subunit protein bL32 (56 aa).

The segment at 1–56 (MAVQQNRKTRSKRGMRRSHDALSAPTLSQDKETGTTHRRHHVAPDGFYRGRKVVDV) is disordered. Residues 7–16 (RKTRSKRGMR) are compositionally biased toward basic residues.

Belongs to the bacterial ribosomal protein bL32 family.

This is Large ribosomal subunit protein bL32 from Chromohalobacter salexigens (strain ATCC BAA-138 / DSM 3043 / CIP 106854 / NCIMB 13768 / 1H11).